Consider the following 833-residue polypeptide: Ventricular zone-expressed PH domain-containing protein homolog 1 (833 aa).

The interaction with TGFBR1 stretch occupies residues 201–319 (TELLALMSQL…TYLVSQLANM (119 aa)). Residues 458–505 (KGVGSDDGEDENRGDIPASISLSEIDPLGQGNDKLPFKTDTERSQLGE) form a disordered region. Basic and acidic residues predominate over residues 492-502 (LPFKTDTERSQ). An interaction with TGFBR1 region spans residues 663–833 (ESTFPQQKDL…RESREVTTYL (171 aa)). The PH domain occupies 716 to 819 (QPLIEGKLKE…WLQCINVAVA (104 aa)).

Belongs to the MELT/VEPH family. Interacts with TGFBR1.

It is found in the cell membrane. Functionally, interacts with TGF-beta receptor type-1 (TGFBR1) and inhibits dissociation of activated SMAD2 from TGFBR1, impeding its nuclear accumulation and resulting in impaired TGF-beta signaling. May also affect FOXO, Hippo and Wnt signaling. In Homo sapiens (Human), this protein is Ventricular zone-expressed PH domain-containing protein homolog 1 (VEPH1).